The following is a 342-amino-acid chain: Ribosomal RNA small subunit methyltransferase C (342 aa).

This sequence belongs to the methyltransferase superfamily. RsmC family. In terms of assembly, monomer.

Its subcellular location is the cytoplasm. The enzyme catalyses guanosine(1207) in 16S rRNA + S-adenosyl-L-methionine = N(2)-methylguanosine(1207) in 16S rRNA + S-adenosyl-L-homocysteine + H(+). Functionally, specifically methylates the guanine in position 1207 of 16S rRNA in the 30S particle. The polypeptide is Ribosomal RNA small subunit methyltransferase C (Salmonella paratyphi B (strain ATCC BAA-1250 / SPB7)).